We begin with the raw amino-acid sequence, 110 residues long: Large ribosomal subunit protein uL22 (110 aa).

Belongs to the universal ribosomal protein uL22 family. Part of the 50S ribosomal subunit.

Its function is as follows. This protein binds specifically to 23S rRNA; its binding is stimulated by other ribosomal proteins, e.g. L4, L17, and L20. It is important during the early stages of 50S assembly. It makes multiple contacts with different domains of the 23S rRNA in the assembled 50S subunit and ribosome. The globular domain of the protein is located near the polypeptide exit tunnel on the outside of the subunit, while an extended beta-hairpin is found that lines the wall of the exit tunnel in the center of the 70S ribosome. This Leptospira interrogans serogroup Icterohaemorrhagiae serovar copenhageni (strain Fiocruz L1-130) protein is Large ribosomal subunit protein uL22.